A 398-amino-acid chain; its full sequence is Dual-specificity RNA methyltransferase RlmN (398 aa).

The Proton acceptor role is filled by Glu-119. In terms of domain architecture, Radical SAM core spans 125–364 (EEERATLCVS…TIVRKTRGDD (240 aa)). Cys-132 and Cys-369 form a disulfide bridge. Cys-139, Cys-143, and Cys-146 together coordinate [4Fe-4S] cluster. S-adenosyl-L-methionine contacts are provided by residues 193–194 (GE), Ser-225, 247–249 (SLH), and Asn-326. Cys-369 serves as the catalytic S-methylcysteine intermediate.

The protein belongs to the radical SAM superfamily. RlmN family. The cofactor is [4Fe-4S] cluster.

The protein localises to the cytoplasm. The enzyme catalyses adenosine(2503) in 23S rRNA + 2 reduced [2Fe-2S]-[ferredoxin] + 2 S-adenosyl-L-methionine = 2-methyladenosine(2503) in 23S rRNA + 5'-deoxyadenosine + L-methionine + 2 oxidized [2Fe-2S]-[ferredoxin] + S-adenosyl-L-homocysteine. It catalyses the reaction adenosine(37) in tRNA + 2 reduced [2Fe-2S]-[ferredoxin] + 2 S-adenosyl-L-methionine = 2-methyladenosine(37) in tRNA + 5'-deoxyadenosine + L-methionine + 2 oxidized [2Fe-2S]-[ferredoxin] + S-adenosyl-L-homocysteine. Specifically methylates position 2 of adenine 2503 in 23S rRNA and position 2 of adenine 37 in tRNAs. m2A2503 modification seems to play a crucial role in the proofreading step occurring at the peptidyl transferase center and thus would serve to optimize ribosomal fidelity. In Pectobacterium atrosepticum (strain SCRI 1043 / ATCC BAA-672) (Erwinia carotovora subsp. atroseptica), this protein is Dual-specificity RNA methyltransferase RlmN.